The primary structure comprises 490 residues: Betaine aldehyde dehydrogenase (490 aa).

K(+) contacts are provided by Ser-26, Ile-27, and Asp-93. Position 150–152 (150–152 (GAW)) interacts with NAD(+). Lys-162 (charge relay system) is an active-site residue. NAD(+)-binding positions include 176-179 (KPSE) and 230-233 (GVET). Leu-246 is a binding site for K(+). Glu-252 (proton acceptor) is an active-site residue. The NAD(+) site is built by Gly-254, Cys-286, and Glu-387. The active-site Nucleophile is the Cys-286. Residue Cys-286 is modified to Cysteine sulfenic acid (-SOH). Positions 457 and 460 each coordinate K(+). Catalysis depends on Glu-464, which acts as the Charge relay system.

It belongs to the aldehyde dehydrogenase family. In terms of assembly, dimer of dimers. The cofactor is K(+).

The catalysed reaction is betaine aldehyde + NAD(+) + H2O = glycine betaine + NADH + 2 H(+). It functions in the pathway amine and polyamine biosynthesis; betaine biosynthesis via choline pathway; betaine from betaine aldehyde: step 1/1. Functionally, involved in the biosynthesis of the osmoprotectant glycine betaine. Catalyzes the irreversible oxidation of betaine aldehyde to the corresponding acid. This Acinetobacter baumannii (strain SDF) protein is Betaine aldehyde dehydrogenase.